Here is a 248-residue protein sequence, read N- to C-terminus: MTWRATVLTLFPEMFPGPLGVSLAGRALASGLWGLEARDIRDSATDRHRSVDDTPAGGGPGMVLRADVLAAAIDAVDAAADRPRLVMSPRGRPLTQARVAELAAGPGPLIVCGRFEGIDQRVIDARGLEEVSIGDYVLSGGEIAAMALIDACVRLLPGVMGKLESSTDESFSAGLLEYPQYTRPQTFEGRAIPEVLLSGDHGKVAAWRLGEAEALTKARRPDLWAARPAQTIRAKGESQKTPKNKTDG.

Residues G113 and 133–138 each bind S-adenosyl-L-methionine; that span reads IGDYVL. Residues 227-248 are disordered; sequence RPAQTIRAKGESQKTPKNKTDG. Residues 234–248 show a composition bias toward basic and acidic residues; the sequence is AKGESQKTPKNKTDG.

Belongs to the RNA methyltransferase TrmD family. As to quaternary structure, homodimer.

The protein localises to the cytoplasm. The enzyme catalyses guanosine(37) in tRNA + S-adenosyl-L-methionine = N(1)-methylguanosine(37) in tRNA + S-adenosyl-L-homocysteine + H(+). Functionally, specifically methylates guanosine-37 in various tRNAs. The protein is tRNA (guanine-N(1)-)-methyltransferase of Rhodopseudomonas palustris (strain TIE-1).